A 241-amino-acid polypeptide reads, in one-letter code: Probable transcriptional regulatory protein AZOSEA20720 (241 aa).

The segment at 1 to 21 (MAGHSKWANIQHRKGRQDAKR) is disordered.

It belongs to the TACO1 family.

The protein localises to the cytoplasm. This Aromatoleum aromaticum (strain DSM 19018 / LMG 30748 / EbN1) (Azoarcus sp. (strain EbN1)) protein is Probable transcriptional regulatory protein AZOSEA20720.